A 291-amino-acid chain; its full sequence is Protein ILRUN (291 aa).

Residues 199–291 (NTQPHRKVEG…LHGPYPFGQS (93 aa)) form a disordered region. The segment covering 212–228 (PFASPQKNRQSDENNLT) has biased composition (polar residues). A phosphoserine mark is found at Ser215, Ser222, and Ser265. Positions 257 to 276 (LSQSSVNLSPSSPANNLSVV) are enriched in low complexity.

As to quaternary structure, interacts with IRF3; the interaction inhibits IRF3 binding to its DNA consensus sequence.

Its subcellular location is the cytoplasm. The protein localises to the nucleus. Functionally, negative regulator of innate antiviral response. Blocks IRF3-dependent cytokine production such as IFNA, IFNB and TNF. Interacts with IRF3 and inhibits IRF3 recruitment to type I IFN promoter sequences while also reducing nuclear levels of the coactivators EP300 and CREBBP. This chain is Protein ILRUN, found in Mus musculus (Mouse).